The following is a 153-amino-acid chain: Protein SprT-like (153 aa).

Residues 6 to 148 (LQQLTEQLSL…CGKCGGKIKE (143 aa)) enclose the SprT-like domain. Residue H67 participates in Zn(2+) binding. E68 is an active-site residue. A Zn(2+)-binding site is contributed by H71.

This sequence belongs to the SprT family. Requires Zn(2+) as cofactor.

Its subcellular location is the cytoplasm. This is Protein SprT-like from Bacillus licheniformis (strain ATCC 14580 / DSM 13 / JCM 2505 / CCUG 7422 / NBRC 12200 / NCIMB 9375 / NCTC 10341 / NRRL NRS-1264 / Gibson 46).